A 400-amino-acid chain; its full sequence is Acetate kinase (400 aa).

N10 contributes to the Mg(2+) binding site. K17 lines the ATP pocket. R91 serves as a coordination point for substrate. The active-site Proton donor/acceptor is D150. ATP-binding positions include 210 to 214 (HLGNG), 285 to 287 (DCR), and 333 to 337 (GIGEN). Residue E387 coordinates Mg(2+).

This sequence belongs to the acetokinase family. As to quaternary structure, homodimer. Requires Mg(2+) as cofactor. Mn(2+) serves as cofactor.

It is found in the cytoplasm. The catalysed reaction is acetate + ATP = acetyl phosphate + ADP. It functions in the pathway metabolic intermediate biosynthesis; acetyl-CoA biosynthesis; acetyl-CoA from acetate: step 1/2. Catalyzes the formation of acetyl phosphate from acetate and ATP. Can also catalyze the reverse reaction. This chain is Acetate kinase, found in Serratia proteamaculans (strain 568).